The primary structure comprises 229 residues: Acidic leucine-rich nuclear phosphoprotein 32-related protein 1 (229 aa).

LRR repeat units follow at residues 19–40, 42–63, 64–85, and 90–110; these read TVDTLFLDNAEDGQIGGLTDQL, NLEMLSMVKCGLTTLAGFPTLP, ALTYLDISDNQLGDNASFDVLV, and DLKKITLASNKLSLDNLRCLK. The LRRCT domain maps to 124–164; it reads PSLGLLEDYREKMFEMIPSLKILDGCDVDGEEVEEEFAGEG. Positions 155 to 177 are enriched in acidic residues; sequence EVEEEFAGEGGEDSEEGSGDEDG. Positions 155 to 229 are disordered; the sequence is EVEEEFAGEG…DNKKAAGDDE (75 aa). Residues 219-229 show a composition bias toward basic and acidic residues; that stretch reads PDNKKAAGDDE.

It belongs to the ANP32 family.

This Caenorhabditis elegans protein is Acidic leucine-rich nuclear phosphoprotein 32-related protein 1.